Here is a 108-residue protein sequence, read N- to C-terminus: ATP-dependent Clp protease adapter protein ClpS (108 aa).

A compositionally biased stretch (basic and acidic residues) spans 1-10 (MADSDKHGDE). Residues 1–21 (MADSDKHGDEGPSTGVVVKAK) are disordered.

It belongs to the ClpS family. In terms of assembly, binds to the N-terminal domain of the chaperone ClpA.

In terms of biological role, involved in the modulation of the specificity of the ClpAP-mediated ATP-dependent protein degradation. The sequence is that of ATP-dependent Clp protease adapter protein ClpS from Rhodospirillum centenum (strain ATCC 51521 / SW).